A 336-amino-acid polypeptide reads, in one-letter code: Cytoplasmic envelopment protein 2 (336 aa).

An interaction with host BBLF1 region spans residues 67 to 69; the sequence is KKK.

This sequence belongs to the herpesviridae cytoplasmic envelopment protein 2 family. In terms of assembly, homodimer. Interacts with BBLF1. Interacts with the capsid. Interacts with BKRF4 (via C-terminus); this interaction is important for infectious virion production. Interacts with host TYK2; this interaction participates to the inhibition of host type I IFN signaling. Interacts with host STAT1; this interaction leads to STAT1 dephosphorylation and inhibition. Interacts with host STAT2; this interaction leads to STAT2 degradation. Interacts with host CUL1; this interaction might facilitate CUL1 recruitment to STAT2, leading to ubiquitination and degradation of the latter. Interacts with host AGO2; this interaction participates to the host miRNA regulation leading to enhanced SUMOylation.

The protein resides in the virion tegument. It is found in the host cytoplasm. Its subcellular location is the host nucleus. The protein localises to the host Golgi apparatus. It localises to the host trans-Golgi network. Functionally, plays a critical role in cytoplasmic virus egress. Participates in the final step of tegumentation and envelope acquisition within the host cytoplasm by directly interacting with the capsid. Upon virion binding to target cell, a signaling cascade is triggered to disrupt the interaction with the capsid, thereby preparing capsid uncoating. Activates the AP-1 pathway and enhances EBV reactivation and virus release. Inhibits type I IFN-induced TYK2, STAT1 and STAT3 phosphorylation, thereby impairing type I IFN signaling and counteracting the ability of IFN-alpha to suppress the reactivation of EBV. Recruits SHP1 phosphatase to dephosphorylate STAT1. Mediates STAT2 ubiquitination and proteasomal degradation. Also suppresses type II and type III IFN signaling. Contributes to G1/S arrest in the host cell. Acts as an miRNA regulator that interferes with the function of RISC in miRNA-mediated mRNA silencing. As a result, SUMOylation is increased. When encapsulated in the exosomes released by EBV-infected host cells, may facilitate the infection in recipient cells. The chain is Cytoplasmic envelopment protein 2 from Epstein-Barr virus (strain AG876) (HHV-4).